The chain runs to 207 residues: Claudin-11 (207 aa).

Position 1 (Met-1) is a topological domain, cytoplasmic. Residues 2–22 (VATCLQVVGFVTSFVGWIGII) form a helical membrane-spanning segment. Topologically, residues 23 to 82 (VTTSTNDWVVTCSYTIPTCRKMDELGSKGLWADCVMATGLHHCKPLVDILILPGYAQACR) are extracellular. Residues 83–103 (ALMIAASVLGLPGILLLLTVL) form a helical membrane-spanning segment. Over 104-122 (PCIRMGHEPGVAKYRRAQL) the chain is Cytoplasmic. Residues 123-143 (AGVLLILLALCAIVATIWFPV) traverse the membrane as a helical segment. Over 144 to 157 (CAHREITIVSFGYS) the chain is Extracellular. A helical membrane pass occupies residues 158 to 178 (LYAGWIGAVMCLVGGCVIVCC). Residues 179 to 207 (SGDAQSFGENRFYYSSGSSSPTHAKSAHV) are Cytoplasmic-facing. Ser-193, Ser-194, Ser-197, and Ser-198 each carry phosphoserine.

Belongs to the claudin family. Interacts with tetraspanin-3/TSPAN3. Interacts with OCLN.

The protein resides in the cell junction. It localises to the tight junction. The protein localises to the cell membrane. Its function is as follows. Plays a major role in tight junction-specific obliteration of the intercellular space, through calcium-independent cell-adhesion activity. The polypeptide is Claudin-11 (Cldn11) (Rattus norvegicus (Rat)).